Here is a 787-residue protein sequence, read N- to C-terminus: Signal transducer and activator of transcription 5B (787 aa).

Tyrosine 90 bears the Phosphotyrosine mark. Phosphoserine is present on serine 128. In terms of domain architecture, SH2 spans 589–686; it reads WNDGAILGFV…EVYSKYYTPV (98 aa). A Phosphotyrosine modification is found at tyrosine 682. Position 699 is a phosphotyrosine; by HCK, JAK and PTK6 (tyrosine 699).

The protein belongs to the transcription factor STAT family. Upon activation, forms a homodimer or a heterodimer with a related family member. Binds NR3C1. Interacts with NCOA1. Interacts with NMI. Interacts with SOCS7. Interacts (via SH2 domain) with INSR. Interacts with CPEB3; this inhibits STAT5B-mediated transcriptional activation. In terms of processing, tyrosine phosphorylated in response to signaling via activated KIT, resulting in translocation to the nucleus. Tyrosine phosphorylated in response to signaling via activated FLT3; wild-type FLT3 results in much weaker phosphorylation than constitutively activated mutant FLT3. Alternatively, can be phosphorylated by JAK2. Phosphorylation at Tyr-699 by PTK6 or HCK leads to an increase of its transcriptional activity.

The protein resides in the cytoplasm. The protein localises to the nucleus. Its function is as follows. Carries out a dual function: signal transduction and activation of transcription. Mediates cellular responses to the cytokine KITLG/SCF and other growth factors. Binds to the GAS element and activates PRL-induced transcription. Positively regulates hematopoietic/erythroid differentiation. This chain is Signal transducer and activator of transcription 5B (STAT5B), found in Bos taurus (Bovine).